A 267-amino-acid polypeptide reads, in one-letter code: 4-hydroxy-tetrahydrodipicolinate reductase (267 aa).

Residues 8 to 13 and Glu34 contribute to the NAD(+) site; that span reads GAGGRM. Arg35 contributes to the NADP(+) binding site. NAD(+) contacts are provided by residues 98-100 and 122-125; these read GTT and APNM. Residue His155 is the Proton donor/acceptor of the active site. His156 provides a ligand contact to (S)-2,3,4,5-tetrahydrodipicolinate. Catalysis depends on Lys159, which acts as the Proton donor. 165–166 is a (S)-2,3,4,5-tetrahydrodipicolinate binding site; that stretch reads GT.

Belongs to the DapB family.

Its subcellular location is the cytoplasm. It carries out the reaction (S)-2,3,4,5-tetrahydrodipicolinate + NAD(+) + H2O = (2S,4S)-4-hydroxy-2,3,4,5-tetrahydrodipicolinate + NADH + H(+). It catalyses the reaction (S)-2,3,4,5-tetrahydrodipicolinate + NADP(+) + H2O = (2S,4S)-4-hydroxy-2,3,4,5-tetrahydrodipicolinate + NADPH + H(+). Its pathway is amino-acid biosynthesis; L-lysine biosynthesis via DAP pathway; (S)-tetrahydrodipicolinate from L-aspartate: step 4/4. Functionally, catalyzes the conversion of 4-hydroxy-tetrahydrodipicolinate (HTPA) to tetrahydrodipicolinate. The polypeptide is 4-hydroxy-tetrahydrodipicolinate reductase (Thioalkalivibrio sulfidiphilus (strain HL-EbGR7)).